The chain runs to 630 residues: Pentatricopeptide repeat-containing protein At2g03880, mitochondrial (630 aa).

A mitochondrion-targeting transit peptide spans 1–76 (MKSVMSKIKL…LIKCCISNRA (76 aa)). 11 PPR repeats span residues 60-94 (DSATYSELIKCCISNRAVHEGNLICRHLYFNGHRP), 95-125 (MMFLVNVLINMYVKFNLLNDAHQLFDQMPQR), 126-160 (NVISWTTMISAYSKCKIHQKALELLVLMLRDNVRP), 161-192 (NVYTYSSVLRSCNGMSDVRMLHCGIIKEGLES), 193-223 (DVFVRSALIDVFAKLGEPEDALSVFDEMVTG), 224-258 (DAIVWNSIIGGFAQNSRSDVALELFKRMKRAGFIA), 259-289 (EQATLTSVLRACTGLALLELGMQAHVHIVKY), 292-322 (DLILNNALVDMYCKCGSLEDALRVFNQMKER), 323-357 (DVITWSTMISGLAQNGYSQEALKLFERMKSSGTKP), 358-388 (NYITIVGVLFACSHAGLLEDGWYYFRSMKKL), and 394-424 (VREHYGCMIDLLGKAGKLDDAVKLLNEMECE). The type E motif stretch occupies residues 429 to 504 (TWRTLLGACR…EPGCSWIEVN (76 aa)). The tract at residues 505–535 (KQIHAFIIGDNSHPQIVEVSKKLNQLIHRLT) is type E(+) motif. Positions 536 to 630 (GIGYVPETNF…DGKCSCGDYW (95 aa)) are type DYW motif.

This sequence belongs to the PPR family. PCMP-H subfamily.

It localises to the mitochondrion. This is Pentatricopeptide repeat-containing protein At2g03880, mitochondrial (PCMP-H44) from Arabidopsis thaliana (Mouse-ear cress).